A 508-amino-acid polypeptide reads, in one-letter code: Light-independent protochlorophyllide reductase subunit B (508 aa).

Asp-36 is a [4Fe-4S] cluster binding site. The active-site Proton donor is the Asp-294. Residue 429–430 (GM) participates in substrate binding.

It belongs to the ChlB/BchB/BchZ family. Protochlorophyllide reductase is composed of three subunits; ChlL, ChlN and ChlB. Forms a heterotetramer of two ChlB and two ChlN subunits. [4Fe-4S] cluster serves as cofactor.

It catalyses the reaction chlorophyllide a + oxidized 2[4Fe-4S]-[ferredoxin] + 2 ADP + 2 phosphate = protochlorophyllide a + reduced 2[4Fe-4S]-[ferredoxin] + 2 ATP + 2 H2O. Its pathway is porphyrin-containing compound metabolism; chlorophyll biosynthesis (light-independent). Its function is as follows. Component of the dark-operative protochlorophyllide reductase (DPOR) that uses Mg-ATP and reduced ferredoxin to reduce ring D of protochlorophyllide (Pchlide) to form chlorophyllide a (Chlide). This reaction is light-independent. The NB-protein (ChlN-ChlB) is the catalytic component of the complex. The protein is Light-independent protochlorophyllide reductase subunit B of Rippkaea orientalis (strain PCC 8801 / RF-1) (Cyanothece sp. (strain PCC 8801)).